Consider the following 123-residue polypeptide: Large ribosomal subunit protein bL12 (123 aa).

The protein belongs to the bacterial ribosomal protein bL12 family. As to quaternary structure, homodimer. Part of the ribosomal stalk of the 50S ribosomal subunit. Forms a multimeric L10(L12)X complex, where L10 forms an elongated spine to which 2 to 4 L12 dimers bind in a sequential fashion. Binds GTP-bound translation factors.

In terms of biological role, forms part of the ribosomal stalk which helps the ribosome interact with GTP-bound translation factors. Is thus essential for accurate translation. The polypeptide is Large ribosomal subunit protein bL12 (Geobacillus thermodenitrificans (strain NG80-2)).